A 493-amino-acid chain; its full sequence is MLSRTAAPTKASARTLSRAAAEQCRTFATVQDGSANPVRHYGGLKDQDRIFQNLYGRYPPDLKHAKKMGDWHKTKEILLKGHDWIIGEVKASGLRGRGGAGFPSGLKWSFMNFKDWDKDDKPRYLVVNADEGEPGTCKDREIMRKDPHKLVEGCLVAGRAMNATAAYIYIRGEFIQEAAILQNAINEAYADGLIGKNACGSGYDFDVYLHRGAGAYVCGEETSLIESLEGKPGKPRLKPPFPAAVGLFGCPSTVANVETVAVAPTICRRGGNWFAGFGRERNQGTKLFCISGHVNNPCTVEEEMSIPMRELIDKHCGGVRGGWDNLLAVIPGGSSTPILPKHICDTQLMDFDALKDSQSGLGTAALIVMDKSTDVVRAISRLSHFYRHESCGQCTPCREGSKWTEQIMKRFEKGQGREREIDMLQELTKQVEGHTICALGEAFAWPIQGLIRHFRPELEARIRKFAQENGGEALAGGWQRNARQQGKLVSPGM.

The transit peptide at 1 to 27 directs the protein to the mitochondrion; the sequence is MLSRTAAPTKASARTLSRAAAEQCRTF. 96 to 105 is an NAD(+) binding site; the sequence is GRGGAGFPSG. 212–259 is an FMN binding site; that stretch reads GAGAYVCGEETSLIESLEGKPGKPRLKPPFPAAVGLFGCPSTVANVET. 4 residues coordinate [4Fe-4S] cluster: Cys-391, Cys-394, Cys-397, and Cys-437.

The protein belongs to the complex I 51 kDa subunit family. Complex I is composed of about 40 different subunits. This is a component of the flavoprotein-sulfur (FP) fragment of the enzyme. FMN is required as a cofactor. The cofactor is [4Fe-4S] cluster.

It is found in the mitochondrion inner membrane. It catalyses the reaction a ubiquinone + NADH + 5 H(+)(in) = a ubiquinol + NAD(+) + 4 H(+)(out). Core subunit of the mitochondrial membrane respiratory chain NADH dehydrogenase (Complex I) that is believed to belong to the minimal assembly required for catalysis. Complex I functions in the transfer of electrons from NADH to the respiratory chain. The immediate electron acceptor for the enzyme is believed to be ubiquinone. This Neurospora crassa (strain ATCC 24698 / 74-OR23-1A / CBS 708.71 / DSM 1257 / FGSC 987) protein is NADH-ubiquinone oxidoreductase 51 kDa subunit, mitochondrial (nuo-51).